Here is a 712-residue protein sequence, read N- to C-terminus: Polyribonucleotide nucleotidyltransferase (712 aa).

2 residues coordinate Mg(2+): D487 and D493. A KH domain is found at 554 to 613 (PRIHTMKISVEKIKDVIGKGGAVIRQLTEETGTTIEIEDDGTIKIAATDGDQAKEAIRRI). Residues 623-691 (GVIYTGKVAR…RQGRVRLSMK (69 aa)) form the S1 motif domain.

The protein belongs to the polyribonucleotide nucleotidyltransferase family. As to quaternary structure, component of the RNA degradosome, which is a multiprotein complex involved in RNA processing and mRNA degradation. Mg(2+) serves as cofactor.

Its subcellular location is the cytoplasm. It catalyses the reaction RNA(n+1) + phosphate = RNA(n) + a ribonucleoside 5'-diphosphate. In terms of biological role, involved in mRNA degradation. Catalyzes the phosphorolysis of single-stranded polyribonucleotides processively in the 3'- to 5'-direction. The chain is Polyribonucleotide nucleotidyltransferase from Vibrio cholerae serotype O1 (strain ATCC 39541 / Classical Ogawa 395 / O395).